The following is a 306-amino-acid chain: S-methyl-5'-thioadenosine phosphorylase (306 aa).

Phosphate contacts are provided by residues T21, 63–64 (RH), and 96–97 (SA). Residue M198 participates in substrate binding. S199 serves as a coordination point for phosphate. 222-224 (DYD) is a binding site for substrate.

This sequence belongs to the PNP/MTAP phosphorylase family. MTAP subfamily. As to quaternary structure, homotrimer.

It is found in the cytoplasm. The protein localises to the nucleus. The catalysed reaction is S-methyl-5'-thioadenosine + phosphate = 5-(methylsulfanyl)-alpha-D-ribose 1-phosphate + adenine. The protein operates within amino-acid biosynthesis; L-methionine biosynthesis via salvage pathway; S-methyl-5-thio-alpha-D-ribose 1-phosphate from S-methyl-5'-thioadenosine (phosphorylase route): step 1/1. Catalyzes the reversible phosphorylation of S-methyl-5'-thioadenosine (MTA) to adenine and 5-methylthioribose-1-phosphate. Involved in the breakdown of MTA, a major by-product of polyamine biosynthesis. Responsible for the first step in the methionine salvage pathway after MTA has been generated from S-adenosylmethionine. Has broad substrate specificity with 6-aminopurine nucleosides as preferred substrates. This is S-methyl-5'-thioadenosine phosphorylase from Sclerotinia sclerotiorum (strain ATCC 18683 / 1980 / Ss-1) (White mold).